The following is a 627-amino-acid chain: Anti-CBASS protein Acb1 (627 aa).

Tyrosine 105 is a 3',3'-cGAMP binding site. Position 105 (tyrosine 105) interacts with 3',3'-cUAMP. Residues 437 to 474 (LADQPETESANENTEQPESGEEGEEGQPTRRAANDAKP) are disordered. Active-site residues include histidine 508, threonine 510, histidine 584, and threonine 586. Residues glutamate 614 and tryptophan 620 each contribute to the 3',3'-cGAMP site. Residues glutamate 614 and tryptophan 620 each contribute to the 3',3'-cUAMP site.

This sequence belongs to the anti-CBASS protein Acb1 family.

It catalyses the reaction 3',3'-cUAMP + H2O = U[3'-5']pAp[3'] + H(+). It carries out the reaction 3',3',3'-c-tri-AMP + H2O = A[3'-5']pA[3'-5']pAp[3'] + H(+). The enzyme catalyses 3',3',3'-cAAG + H2O = G[3'-5']pA[3'-5']pAp[3'] + H(+). The catalysed reaction is 3',3',3'-cAAG + H2O = A[3'-5']pG[3'-5']pAp[3'] + H(+). It catalyses the reaction 3',3'-cGAMP + H2O = G[3'-5']pAp[3'] + H(+). Functionally, counteracts or regulates the endogenous CBASS antiviral defense system. Phosphodiesterase that enables metal-independent hydrolysis of the host cyclic di- and trinucleotide CBASS signals such as 3'3'-cGAMP, 3'3'cUA, and 3'3'3'-cAAA. This is Anti-CBASS protein Acb1 from Caulobacter sp. (strain RHG1).